Reading from the N-terminus, the 99-residue chain is Large ribosomal subunit protein eL21 (99 aa).

Over residues 1–18 the composition is skewed to basic residues; the sequence is MVKHSRGNRTRSRKLLKK. The interval 1-26 is disordered; that stretch reads MVKHSRGNRTRSRKLLKKSPRERGAV.

Belongs to the eukaryotic ribosomal protein eL21 family.

The polypeptide is Large ribosomal subunit protein eL21 (Metallosphaera sedula (strain ATCC 51363 / DSM 5348 / JCM 9185 / NBRC 15509 / TH2)).